The primary structure comprises 450 residues: Probable cysteine desulfurase, mitochondrial (450 aa).

Residues 1 to 52 (MNRSILKFVKNGIISSSSRINNNGFINKNNNNRWFATLPQPNRGIAGEKQPI) constitute a mitochondrion transit peptide. Pyridoxal 5'-phosphate is bound by residues 120-121 (AT), Asn-200, Gln-228, and 248-250 (SGH). At Lys-251 the chain carries N6-(pyridoxal phosphate)lysine. Thr-288 provides a ligand contact to pyridoxal 5'-phosphate. Cys-374 (cysteine persulfide intermediate) is an active-site residue. Cys-374 is a binding site for [2Fe-2S] cluster.

It belongs to the class-V pyridoxal-phosphate-dependent aminotransferase family. NifS/IscS subfamily. The cofactor is pyridoxal 5'-phosphate.

Its subcellular location is the mitochondrion. It is found in the nucleus. The catalysed reaction is (sulfur carrier)-H + L-cysteine = (sulfur carrier)-SH + L-alanine. In terms of biological role, catalyzes the removal of elemental sulfur from cysteine to produce alanine. It supplies the inorganic sulfur for iron-sulfur (Fe-S) clusters. The polypeptide is Probable cysteine desulfurase, mitochondrial (nfs1) (Dictyostelium discoideum (Social amoeba)).